A 600-amino-acid polypeptide reads, in one-letter code: MTTSESSSTSSVKIYFRLLSYVRPHVGIFLLSIIGFVIFASTQPMLAGILKYFVDGLTNPEAVLFPNVPYLRELQLLQAVPLLIVLIAAWQGLGSFLGNYFLAKVSLGLVHDLRVELFNKLLVLPNRYFDTTNSGHLISRITFNVTMVTGAATDAIKVVIREGLTVVFLFIYLLMMNWKLTLVMLAILPLIAVMVGSASKKFRKQSKKIQVAMGDVTHVASETIQGYRVVRSFGGESYEQNRFAQASDSNTRKQLRMTKTGAIYTPMLQLVIYSAMAVLMFLVLFLRGDATAGDLVAYITAAGLLPKPIRQLSEVSSTIQKGVAGAESIFEQLDVEEEVDTGTIERDRVTGHLEVKNLSFFYPQTERQVLNDISFSAAPGQMIALVGRSGSGKSTLANLIPRFYGHEMGNILLDGVEINDYRLRNLRKHIAQVNQNVTLFNDTIANNIAYGDLAGAPRADIEAAAADAYAKEFIDQLPQGFDTQVGENGVLLSGGQRQRLAIARALLKNAPLLILDEATSALDTESERHIQAALDHVMKGRTTLVIAHRLSTIEKADMILVMDAGQIVERGTHTELLAQNGYYARLHAMGLDEPSPVGAV.

Transmembrane regions (helical) follow at residues 26–46 (VGIFLLSIIGFVIFASTQPML), 82–102 (LLIVLIAAWQGLGSFLGNYFL), 167–187 (VFLFIYLLMMNWKLTLVMLAI), and 266–286 (PMLQLVIYSAMAVLMFLVLFL). The 292-residue stretch at 30-321 (LLSIIGFVIF…LSEVSSTIQK (292 aa)) folds into the ABC transmembrane type-1 domain. Residues 353 to 589 (LEVKNLSFFY…NGYYARLHAM (237 aa)) form the ABC transporter domain. 387–394 (GRSGSGKS) contributes to the ATP binding site.

Belongs to the ABC transporter superfamily. Lipid exporter (TC 3.A.1.106) family. As to quaternary structure, homodimer.

Its subcellular location is the cell inner membrane. The catalysed reaction is ATP + H2O + lipid A-core oligosaccharideSide 1 = ADP + phosphate + lipid A-core oligosaccharideSide 2.. In terms of biological role, involved in lipopolysaccharide (LPS) biosynthesis. Translocates lipid A-core from the inner to the outer leaflet of the inner membrane. Transmembrane domains (TMD) form a pore in the inner membrane and the ATP-binding domain (NBD) is responsible for energy generation. In Pseudomonas savastanoi pv. phaseolicola (strain 1448A / Race 6) (Pseudomonas syringae pv. phaseolicola (strain 1448A / Race 6)), this protein is ATP-dependent lipid A-core flippase.